The primary structure comprises 255 residues: NAD-dependent protein deacylase (255 aa).

Positions 1–252 (MPKLVVFSGA…AEIEQELEQF (252 aa)) constitute a Deacetylase sirtuin-type domain. 9–28 (GAGLSAESGLETFRDNGGLW) contributes to the NAD(+) binding site. The substrate site is built by Tyr53 and Arg56. An NAD(+)-binding site is contributed by 103–106 (QNVD). The active-site Proton acceptor is His121. 4 residues coordinate Zn(2+): Cys129, Cys132, Cys148, and Cys151. Residues 190–192 (GTS), 218–220 (NLQ), and Thr238 each bind NAD(+).

The protein belongs to the sirtuin family. Class III subfamily. Requires Zn(2+) as cofactor.

It localises to the cytoplasm. It carries out the reaction N(6)-acetyl-L-lysyl-[protein] + NAD(+) + H2O = 2''-O-acetyl-ADP-D-ribose + nicotinamide + L-lysyl-[protein]. The catalysed reaction is N(6)-succinyl-L-lysyl-[protein] + NAD(+) + H2O = 2''-O-succinyl-ADP-D-ribose + nicotinamide + L-lysyl-[protein]. Functionally, NAD-dependent lysine deacetylase and desuccinylase that specifically removes acetyl and succinyl groups on target proteins. Modulates the activities of several proteins which are inactive in their acylated form. The polypeptide is NAD-dependent protein deacylase (Helicobacter hepaticus (strain ATCC 51449 / 3B1)).